The sequence spans 248 residues: MYKLVLVRHGESEWNKENLFTGWTDVKLSEKGISEALEGGRVLKQEGYSFDIAFSSVLVRANDTLNIILRELGQSYIDVEKSWRLNERHYGALQGLNKAETAEKYGEDKVLMWRRSYDIPPMPLEESDKRHPIHDLRYRGIPKSELPSTECLKDTVARVIPYWTDKIARAIIEGKKVIIAAHGNSLRALVKYLDNMSDDDILKLNIPTGIPLVYELDRDLRPIKHYYLGDEDKIKAAMESVANQGKKK.

Residues 8 to 15 (RHGESEWN), 21 to 22 (TG), arginine 60, 87 to 90 (ERHY), lysine 98, 114 to 115 (RR), and 183 to 184 (GN) contribute to the substrate site. Histidine 9 functions as the Tele-phosphohistidine intermediate in the catalytic mechanism. The active-site Proton donor/acceptor is glutamate 87.

It belongs to the phosphoglycerate mutase family. BPG-dependent PGAM subfamily.

It carries out the reaction (2R)-2-phosphoglycerate = (2R)-3-phosphoglycerate. The protein operates within carbohydrate degradation; glycolysis; pyruvate from D-glyceraldehyde 3-phosphate: step 3/5. Functionally, catalyzes the interconversion of 2-phosphoglycerate and 3-phosphoglycerate. This Borrelia turicatae (strain 91E135) protein is 2,3-bisphosphoglycerate-dependent phosphoglycerate mutase.